The following is a 114-amino-acid chain: Probable prefoldin subunit 2 (114 aa).

The protein belongs to the prefoldin subunit beta family. In terms of assembly, heterohexamer of two PFD-alpha type and four PFD-beta type subunits.

Binds specifically to cytosolic chaperonin (c-CPN) and transfers target proteins to it. Binds to nascent polypeptide chain and promotes folding in an environment in which there are many competing pathways for nonnative proteins. The protein is Probable prefoldin subunit 2 of Schizosaccharomyces pombe (strain 972 / ATCC 24843) (Fission yeast).